A 58-amino-acid chain; its full sequence is Conotoxin Im5.4 (58 aa).

Positions 1–18 (MRCLPVVVFLLLLLSAAA) are cleaved as a signal peptide. Residues 19–28 (APGVGSKTER) constitute a propeptide that is removed on maturation.

Belongs to the conotoxin T superfamily. Post-translationally, contains 2 disulfide bonds that can be either 'C1-C3, C2-C4' or 'C1-C4, C2-C3', since these disulfide connectivities have been observed for conotoxins with cysteine framework V (for examples, see AC P0DQQ7 and AC P81755). Expressed by the venom duct.

It localises to the secreted. In terms of biological role, probable neurotoxin. The sequence is that of Conotoxin Im5.4 from Conus imperialis (Imperial cone).